We begin with the raw amino-acid sequence, 449 residues long: tRNA-2-methylthio-N(6)-dimethylallyladenosine synthase (449 aa).

The 122-residue stretch at 3 to 124 (KMLYIKTYGC…LPTMLEKLDS (122 aa)) folds into the MTTase N-terminal domain. The [4Fe-4S] cluster site is built by cysteine 12, cysteine 48, cysteine 87, cysteine 163, cysteine 167, and cysteine 170. Residues 149–380 (KSPTVSGLVS…QAQLMQQQLE (232 aa)) enclose the Radical SAM core domain. The TRAM domain occupies 383-447 (QKLIGKVVPV…ASSLFGEVYA (65 aa)).

It belongs to the methylthiotransferase family. MiaB subfamily. As to quaternary structure, monomer. [4Fe-4S] cluster is required as a cofactor.

It is found in the cytoplasm. It catalyses the reaction N(6)-dimethylallyladenosine(37) in tRNA + (sulfur carrier)-SH + AH2 + 2 S-adenosyl-L-methionine = 2-methylsulfanyl-N(6)-dimethylallyladenosine(37) in tRNA + (sulfur carrier)-H + 5'-deoxyadenosine + L-methionine + A + S-adenosyl-L-homocysteine + 2 H(+). Functionally, catalyzes the methylthiolation of N6-(dimethylallyl)adenosine (i(6)A), leading to the formation of 2-methylthio-N6-(dimethylallyl)adenosine (ms(2)i(6)A) at position 37 in tRNAs that read codons beginning with uridine. This Orientia tsutsugamushi (strain Ikeda) (Rickettsia tsutsugamushi) protein is tRNA-2-methylthio-N(6)-dimethylallyladenosine synthase.